The primary structure comprises 444 residues: 23S rRNA (uracil(1939)-C(5))-methyltransferase RlmD (444 aa).

In terms of domain architecture, TRAM spans 5-64 (KPKLNLTSQTARIVNLSHDGRGIARVNGKATFIQGALPGEVVEFQYTRVKKDFDEGKLLS). Residues cysteine 77, cysteine 83, cysteine 86, and cysteine 166 each contribute to the [4Fe-4S] cluster site. S-adenosyl-L-methionine-binding residues include glutamine 276, phenylalanine 305, asparagine 310, glutamate 326, asparagine 353, and aspartate 374. The active-site Nucleophile is the cysteine 400.

This sequence belongs to the class I-like SAM-binding methyltransferase superfamily. RNA M5U methyltransferase family. RlmD subfamily.

The enzyme catalyses uridine(1939) in 23S rRNA + S-adenosyl-L-methionine = 5-methyluridine(1939) in 23S rRNA + S-adenosyl-L-homocysteine + H(+). Its function is as follows. Catalyzes the formation of 5-methyl-uridine at position 1939 (m5U1939) in 23S rRNA. The sequence is that of 23S rRNA (uracil(1939)-C(5))-methyltransferase RlmD from Legionella pneumophila (strain Paris).